We begin with the raw amino-acid sequence, 522 residues long: 2-isopropylmalate synthase (522 aa).

The region spanning 5-267 (VIIFDTTLRD…ETGINAKEIH (263 aa)) is the Pyruvate carboxyltransferase domain. Mn(2+) is bound by residues aspartate 14, histidine 202, histidine 204, and asparagine 238. A regulatory domain region spans residues 392–522 (QLQQLVVQSD…MQKNRELGGV (131 aa)).

The protein belongs to the alpha-IPM synthase/homocitrate synthase family. LeuA type 1 subfamily. As to quaternary structure, homodimer. Mn(2+) is required as a cofactor.

It localises to the cytoplasm. The enzyme catalyses 3-methyl-2-oxobutanoate + acetyl-CoA + H2O = (2S)-2-isopropylmalate + CoA + H(+). The protein operates within amino-acid biosynthesis; L-leucine biosynthesis; L-leucine from 3-methyl-2-oxobutanoate: step 1/4. Functionally, catalyzes the condensation of the acetyl group of acetyl-CoA with 3-methyl-2-oxobutanoate (2-ketoisovalerate) to form 3-carboxy-3-hydroxy-4-methylpentanoate (2-isopropylmalate). The polypeptide is 2-isopropylmalate synthase (Shewanella baltica (strain OS223)).